A 1260-amino-acid chain; its full sequence is Myosin-1 (1260 aa).

Residues 34-713 (VGVSDLTLLS…TLFALEHMRD (680 aa)) form the Myosin motor domain. ATP is bound at residue 127 to 134 (GESGAGKT). S355 bears the Phosphoserine mark. The segment at 402 to 484 (SIGILDIYGF…PGIFATLDDS (83 aa)) is actin-binding. IQ domains lie at 717-737 (YNMA…RIDS) and 738-763 (AIKI…YGHR). Residues 769–959 (KERRAMSLLG…TISVRQGRPA (191 aa)) enclose the TH1 domain. Composition is skewed to polar residues over residues 948–963 (SSTI…NSRQ) and 972–988 (TLLS…SKGY). The disordered stretch occupies residues 948–1106 (SSTISVRQGR…PPPPTKQNIP (159 aa)). A compositionally biased stretch (low complexity) spans 989-1013 (GQQQHAQPSYGQQQQQQQRYAPQSH). The span at 1030–1064 (QQNFAASAAQTAYHPQQASHARVPSTNNAHTQHNR) shows a compositional bias: polar residues. A compositionally biased stretch (low complexity) spans 1065–1082 (QPAQQAAQPVQQAAQPAA). The segment covering 1092–1101 (APPPPPPPPT) has biased composition (pro residues). The SH3 domain occupies 1103–1165 (QNIPKFQAAY…PTNYIVEYKE (63 aa)).

Belongs to the TRAFAC class myosin-kinesin ATPase superfamily. Myosin family. Post-translationally, phosphorylation of the TEDS site (Ser-355) is required for the polarization of the actin cytoskeleton. Phosphorylation probably activates the myosin-I ATPase activity.

It is found in the cytoplasm. The protein resides in the cytoskeleton. It localises to the actin patch. In terms of biological role, type-I myosin implicated in the organization of the actin cytoskeleton. Required for proper actin cytoskeleton polarization. At the cell cortex, assembles in patch-like structures together with proteins from the actin-polymerizing machinery and promotes actin assembly. Functions as actin nucleation-promoting factor (NPF) for the Arp2/3 complex. The protein is Myosin-1 (MYO1) of Kluyveromyces lactis (strain ATCC 8585 / CBS 2359 / DSM 70799 / NBRC 1267 / NRRL Y-1140 / WM37) (Yeast).